The primary structure comprises 351 residues: Riboflavin-binding protein RibY (351 aa).

Residues 1–19 (MMKLRVLTLGILIILLITA) form the signal peptide. Residue cysteine 20 is the site of N-palmitoyl cysteine attachment. Cysteine 20 carries the S-diacylglycerol cysteine lipid modification.

The protein belongs to the NMT1 family. As to quaternary structure, the complex is likely composed of an ATP-binding protein, a transmembrane protein (RibX) and a solute-binding protein (RibY).

The protein resides in the cell membrane. Its function is as follows. Part of an ABC transporter complex that transports riboflavin into the cell. Binds riboflavin. This Chloroflexus aurantiacus (strain ATCC 29366 / DSM 635 / J-10-fl) protein is Riboflavin-binding protein RibY.